A 444-amino-acid polypeptide reads, in one-letter code: Multidrug resistance protein MdtA (444 aa).

A signal peptide spans Met1–Ala20. The span at Asn37–Ser52 shows a compositional bias: polar residues. 2 disordered regions span residues Asn37–Pro60 and Thr398–Ser444. Low complexity predominate over residues Ala409–Glu419. Residues Ala435–Ser444 are compositionally biased toward polar residues.

Belongs to the membrane fusion protein (MFP) (TC 8.A.1) family. As to quaternary structure, part of a tripartite efflux system composed of MdtA, MdtB and MdtC.

Its subcellular location is the cell inner membrane. This chain is Multidrug resistance protein MdtA, found in Yersinia pseudotuberculosis serotype O:3 (strain YPIII).